Consider the following 426-residue polypeptide: 26S proteasome regulatory subunit 7 homolog A (426 aa).

ATP is bound at residue 209 to 216 (GPPGTGKT). Residues Lys-400 and Lys-415 each participate in a glycyl lysine isopeptide (Lys-Gly) (interchain with G-Cter in ubiquitin) cross-link.

It belongs to the AAA ATPase family. In terms of assembly, component of the 19S regulatory particle (RP/PA700) base subcomplex of the 26S proteasome. The 26S proteasome is composed of a core protease (CP), known as the 20S proteasome, capped at one or both ends by the 19S regulatory particle (RP/PA700). The RP/PA700 complex is composed of at least 17 different subunits in two subcomplexes, the base and the lid, which form the portions proximal and distal to the 20S proteolytic core, respectively.

The protein localises to the cytoplasm. The protein resides in the nucleus. Functionally, the 26S proteasome is involved in the ATP-dependent degradation of ubiquitinated proteins. The regulatory (or ATPase) complex confers ATP dependency and substrate specificity to the 26S complex. The chain is 26S proteasome regulatory subunit 7 homolog A (RPT1A) from Arabidopsis thaliana (Mouse-ear cress).